The chain runs to 148 residues: uncharacterized protein (148 aa).

Residues 1–18 form the signal peptide; sequence MKIILTVLAGVGLLSAGG. The N-palmitoyl cysteine moiety is linked to residue Cys-19. Cys-19 carries the S-diacylglycerol cysteine lipid modification.

The protein localises to the cell membrane. This is an uncharacterized protein from Bacillus subtilis (strain 168).